Reading from the N-terminus, the 341-residue chain is Anthranilate phosphoribosyltransferase (341 aa).

5-phospho-alpha-D-ribose 1-diphosphate contacts are provided by residues glycine 82, 85–86 (GD), threonine 90, 92–95 (NIST), 110–118 (KHGNRAITS), and threonine 122. An anthranilate-binding site is contributed by glycine 82. Serine 94 is a binding site for Mg(2+). Anthranilate is bound at residue asparagine 113. Arginine 168 contributes to the anthranilate binding site. Aspartate 226 and glutamate 227 together coordinate Mg(2+).

It belongs to the anthranilate phosphoribosyltransferase family. Homodimer. Mg(2+) is required as a cofactor.

It carries out the reaction N-(5-phospho-beta-D-ribosyl)anthranilate + diphosphate = 5-phospho-alpha-D-ribose 1-diphosphate + anthranilate. It participates in amino-acid biosynthesis; L-tryptophan biosynthesis; L-tryptophan from chorismate: step 2/5. In terms of biological role, catalyzes the transfer of the phosphoribosyl group of 5-phosphorylribose-1-pyrophosphate (PRPP) to anthranilate to yield N-(5'-phosphoribosyl)-anthranilate (PRA). The chain is Anthranilate phosphoribosyltransferase from Caulobacter vibrioides (strain ATCC 19089 / CIP 103742 / CB 15) (Caulobacter crescentus).